The following is a 196-amino-acid chain: RNA-binding protein with multiple splicing (196 aa).

M1 bears the N-acetylmethionine mark. T12 carries the post-translational modification Phosphothreonine. Residues 24–101 form the RRM domain; that stretch reads RTLFVSGLPL…QTLRLEFAKA (78 aa). An interaction with RNA region spans residues 98–105; that stretch reads FAKANTKM. A Phosphothreonine modification is found at T113.

As to quaternary structure, homodimer; each protein chain binds one RNA molecule via the external surface of the homodimer. Interacts with RNA binding proteins MBNL1, RBFOX2, RBM4 and RBM14; the interaction allows cooperative assembly of stable cell-specific alternative splicing regulatory complexes. Interacts with SMAD2, SMAD3 and SMAD4; the interactions are direct. Ubiquitously expressed, at various levels depending on the isoform and the tissue. Strongly expressed in the heart, prostate, small intestine, large intestine, and ovary; moderately expressed in the placenta, lung, liver, kidney, pancreas, and testis; and poorly expressed in the skeletal muscle, spleen, thymus and peripheral leukocytes.

It localises to the nucleus. The protein localises to the cytoplasm. Its subcellular location is the stress granule. The protein resides in the P-body. Functionally, RNA binding protein that mediates the regulation of pre-mRNA alternative splicing (AS). Acts either as activator (FLNB, HSPG2, LIPA1, MYOCD, PTPRF and PPFIBP1) or repressor (TPM1, ACTN1, ITGA7, PIEZO1, LSM14B, MBNL1 and MBML2) of splicing events on specific pre-mRNA targets. Together with RNA binding proteins RBFOX2 and MBNL1/2, activates a splicing program associated with differentiated contractile vascular smooth muscle cells (SMC) by regulating AS of numerous pre-mRNA involved in actin cytoskeleton and focal adhesion machineries, suggesting a role in promoting a cell differentiated state. Binds to introns, exons and 3'-UTR associated with tandem CAC trinucleotide motifs separated by a variable spacer region, at a minimum as a dimer. The minimal length of RNA required for RBPMS-binding tandem CAC motifs is 15 nt, with spacing ranging from 1 to 9 nt. Can also bind to CA dinucleotide repeats. Mediates repression of TPM1 exon 3 by binding to CAC tandem repeats in the flanking intronic regions, followed by higher-order oligomerization and heterotypic interactions with other splicing regulators including MBNL1 and RBFOX2, which prevents assembly of ATP-dependent splicing complexes. In terms of biological role, acts as a regulator of pre-mRNA alternative splicing (AS). Binds mRNA. Regulates AS of ACTN1, FLNB, although with lower efficiency than isoform A / RBPMSA. Acts as coactivator of SMAD transcriptional activity in a TGFB1-dependent manner, possibly through increased phosphorylation of SMAD2 and SMAD3 at the C-terminal SSXS regions and promotion of the nuclear accumulation of SMAD proteins. The chain is RNA-binding protein with multiple splicing from Homo sapiens (Human).